The chain runs to 505 residues: Maturase K (505 aa).

This sequence belongs to the intron maturase 2 family. MatK subfamily.

The protein resides in the plastid. It localises to the chloroplast. Usually encoded in the trnK tRNA gene intron. Probably assists in splicing its own and other chloroplast group II introns. This Nuphar advena (Common spatterdock) protein is Maturase K.